Reading from the N-terminus, the 155-residue chain is Large ribosomal subunit protein uL30 (155 aa).

It belongs to the universal ribosomal protein uL30 family. As to quaternary structure, part of the 50S ribosomal subunit.

This is Large ribosomal subunit protein uL30 from Nanoarchaeum equitans (strain Kin4-M).